Consider the following 527-residue polypeptide: DUF21 domain-containing protein At1g47330 (527 aa).

Residues 1–15 (MSSDIPCCGTTFSLY) are Extracellular-facing. The region spanning 8 to 191 (CGTTFSLYVV…GKGGDLTTDE (184 aa)) is the CNNM transmembrane domain. The chain crosses the membrane as a helical span at residues 16 to 36 (VVIIIALVAFAGLMAGLTLGL). Residues 37–70 (MSLGLVDLEVLIKSGRPQDRINAGKIFPVVKNQH) lie on the Cytoplasmic side of the membrane. The chain crosses the membrane as a helical span at residues 71 to 91 (LLLCTLLIGNSMAMEALPIFL). The Extracellular segment spans residues 92–93 (DK). The helical transmembrane segment at 94-114 (IVPPWLAILLSVTLILVFGEI) threads the bilayer. Over 115 to 126 (MPQAVCTRYGLK) the chain is Cytoplasmic. Residues 127–147 (VGAIMAPFVRVLLVLFFPISY) form a helical membrane-spanning segment. Over 148-527 (PISKVLDWML…PKHEESTQTL (380 aa)) the chain is Extracellular. 3 CBS domains span residues 210 to 271 (MTPI…EVPL), 274 to 334 (MSMR…TKDE), and 366 to 435 (KSEN…ILDE). Disordered regions lie at residues 307–335 (KDLDEQEQSPETSENGIERRKNKKTKDEL), 358–384 (ETGDAKSGKSENGEEQQGSGKTSLLAA), and 464–527 (ITQS…TQTL). Ser-315 is modified (phosphoserine). A compositionally biased stretch (basic and acidic residues) spans 358-369 (ETGDAKSGKSEN). A compositionally biased stretch (low complexity) spans 464-501 (ITQSSSGSTSPNQTSHMATPDSSPTTKPSNSSPTRKPS). Asn-475 is a glycosylation site (N-linked (GlcNAc...) asparagine). Residues 502 to 515 (VSSPTREPSDSSHS) show a composition bias toward polar residues. The segment covering 518–527 (PKHEESTQTL) has biased composition (basic and acidic residues).

The protein localises to the membrane. This chain is DUF21 domain-containing protein At1g47330 (CBSDUF7), found in Arabidopsis thaliana (Mouse-ear cress).